Reading from the N-terminus, the 867-residue chain is Leucine--tRNA ligase (867 aa).

The short motif at 42–52 is the 'HIGH' region element; the sequence is PYPSGKLHMGH. Residues 631-635 carry the 'KMSKS' region motif; sequence KMSKS. An ATP-binding site is contributed by Lys-634.

Belongs to the class-I aminoacyl-tRNA synthetase family.

It localises to the cytoplasm. The catalysed reaction is tRNA(Leu) + L-leucine + ATP = L-leucyl-tRNA(Leu) + AMP + diphosphate. The chain is Leucine--tRNA ligase from Dichelobacter nodosus (strain VCS1703A).